Reading from the N-terminus, the 311-residue chain is Probable dihydroorotate dehydrogenase A (fumarate) (311 aa).

Residues Lys-45, 69–73 (NSMGL), and Asn-128 each bind substrate. Residue 45-46 (KT) participates in FMN binding. Residue Asn-128 coordinates FMN. Cys-131 functions as the Nucleophile in the catalytic mechanism. FMN contacts are provided by Lys-165 and Val-193. 194–195 (NS) provides a ligand contact to substrate. FMN is bound by residues Gly-220, 248-249 (GG), and 270-271 (GT).

Belongs to the dihydroorotate dehydrogenase family. Type 1 subfamily. Homodimer. Requires FMN as cofactor.

The protein resides in the cytoplasm. The catalysed reaction is (S)-dihydroorotate + fumarate = orotate + succinate. Its pathway is pyrimidine metabolism; UMP biosynthesis via de novo pathway. Functionally, catalyzes the conversion of dihydroorotate to orotate with fumarate as the electron acceptor. The polypeptide is Probable dihydroorotate dehydrogenase A (fumarate) (pyrDA) (Streptococcus pneumoniae serotype 4 (strain ATCC BAA-334 / TIGR4)).